Reading from the N-terminus, the 140-residue chain is Small ribosomal subunit protein uS12 (140 aa).

A 3-methylthioaspartic acid modification is found at D102.

This sequence belongs to the universal ribosomal protein uS12 family. In terms of assembly, part of the 30S ribosomal subunit. Contacts proteins S8 and S17. May interact with IF1 in the 30S initiation complex.

In terms of biological role, with S4 and S5 plays an important role in translational accuracy. Interacts with and stabilizes bases of the 16S rRNA that are involved in tRNA selection in the A site and with the mRNA backbone. Located at the interface of the 30S and 50S subunits, it traverses the body of the 30S subunit contacting proteins on the other side and probably holding the rRNA structure together. The combined cluster of proteins S8, S12 and S17 appears to hold together the shoulder and platform of the 30S subunit. The polypeptide is Small ribosomal subunit protein uS12 (Bacillus cereus (strain G9842)).